We begin with the raw amino-acid sequence, 27 residues long: Conotoxin (27 aa).

Disulfide bonds link C2–C16, C6–C18, and C12–C23. Position 27 is an asparagine amide (N27).

Expressed by the venom duct.

The protein resides in the secreted. Probable neurotoxin that inhibits ion channels. The protein is Conotoxin of Conus amadis (Amadis cone).